The primary structure comprises 1285 residues: Tat-binding homolog 7 (1285 aa).

Disordered stretches follow at residues methionine 1–arginine 95, methionine 121–arginine 173, glycine 224–glutamine 243, and glutamine 258–arginine 359. Acidic residues-rich tracts occupy residues glutamate 226–glutamate 237 and glutamine 258–glutamate 270. Basic residues predominate over residues asparagine 311–arginine 325. Glycine 446 to threonine 453 provides a ligand contact to ATP. Residues alanine 928–methionine 1032 form the Bromo domain. The interval glutamate 1100–glutamate 1196 is disordered. A compositionally biased stretch (basic residues) spans lysine 1136–lysine 1149. Acidic residues predominate over residues proline 1155–aspartate 1175.

The protein belongs to the AAA ATPase family.

In terms of biological role, thought to form a complex that enhances transcription from repetitive DNA sequences by modulating chromatin structure. This is Tat-binding homolog 7 from Caenorhabditis briggsae.